We begin with the raw amino-acid sequence, 289 residues long: Probable WRKY transcription factor 38 (289 aa).

The interval 62–103 is disordered; that stretch reads PETEDDQFSDLSSRDSSPPPQGSPSKKRKIDSTNSSENWRDD. A DNA-binding region (WRKY) is located at residues 104–172; sequence SPDPIYYDGY…YFGHHTCKTE (69 aa). Over residues 249–266 the composition is skewed to low complexity; the sequence is LSSPSGSYPPSSSSGSES. The disordered stretch occupies residues 249–278; sequence LSSPSGSYPPSSSSGSESADFNSDLLFDNP.

This sequence belongs to the WRKY group III family.

It is found in the nucleus. Transcription factor. Interacts specifically with the W box (5'-(T)TGAC[CT]-3'), a frequently occurring elicitor-responsive cis-acting element. The protein is Probable WRKY transcription factor 38 (WRKY38) of Arabidopsis thaliana (Mouse-ear cress).